A 213-amino-acid polypeptide reads, in one-letter code: Thiamine-phosphate synthase (213 aa).

4-amino-2-methyl-5-(diphosphooxymethyl)pyrimidine-binding positions include 38 to 42 and Asp-70; that span reads QLREK. The Mg(2+) site is built by Asp-71 and Glu-90. 4-amino-2-methyl-5-(diphosphooxymethyl)pyrimidine is bound at residue Ser-109. 135–137 serves as a coordination point for 2-[(2R,5Z)-2-carboxy-4-methylthiazol-5(2H)-ylidene]ethyl phosphate; that stretch reads TQT. Lys-138 serves as a coordination point for 4-amino-2-methyl-5-(diphosphooxymethyl)pyrimidine. Residues Gly-165 and 185–186 each bind 2-[(2R,5Z)-2-carboxy-4-methylthiazol-5(2H)-ylidene]ethyl phosphate; that span reads VS.

This sequence belongs to the thiamine-phosphate synthase family. Mg(2+) is required as a cofactor.

It carries out the reaction 2-[(2R,5Z)-2-carboxy-4-methylthiazol-5(2H)-ylidene]ethyl phosphate + 4-amino-2-methyl-5-(diphosphooxymethyl)pyrimidine + 2 H(+) = thiamine phosphate + CO2 + diphosphate. It catalyses the reaction 2-(2-carboxy-4-methylthiazol-5-yl)ethyl phosphate + 4-amino-2-methyl-5-(diphosphooxymethyl)pyrimidine + 2 H(+) = thiamine phosphate + CO2 + diphosphate. The enzyme catalyses 4-methyl-5-(2-phosphooxyethyl)-thiazole + 4-amino-2-methyl-5-(diphosphooxymethyl)pyrimidine + H(+) = thiamine phosphate + diphosphate. It functions in the pathway cofactor biosynthesis; thiamine diphosphate biosynthesis; thiamine phosphate from 4-amino-2-methyl-5-diphosphomethylpyrimidine and 4-methyl-5-(2-phosphoethyl)-thiazole: step 1/1. Functionally, condenses 4-methyl-5-(beta-hydroxyethyl)thiazole monophosphate (THZ-P) and 2-methyl-4-amino-5-hydroxymethyl pyrimidine pyrophosphate (HMP-PP) to form thiamine monophosphate (TMP). The polypeptide is Thiamine-phosphate synthase (Lacticaseibacillus paracasei (strain ATCC 334 / BCRC 17002 / CCUG 31169 / CIP 107868 / KCTC 3260 / NRRL B-441) (Lactobacillus paracasei)).